A 397-amino-acid polypeptide reads, in one-letter code: Ribosomal RNA processing protein 1 homolog (397 aa).

Basic and acidic residues predominate over residues 334-343 (EAAEAARQEN). The interval 334–366 (EAAEAARQENGDDVPDDEIAEVKKGNGKKTAVP) is disordered.

This sequence belongs to the RRP1 family.

It localises to the nucleus. Functionally, may be involved in the generation of 28S rRNA. This Caenorhabditis elegans protein is Ribosomal RNA processing protein 1 homolog.